The chain runs to 145 residues: Actin-depolymerizing factor 2 (145 aa).

The ADF-H domain occupies 13 to 145 (GMGVAPDIRD…DLEVLRERAH (133 aa)).

Belongs to the actin-binding proteins ADF family.

In terms of biological role, actin-depolymerizing protein. Severs actin filaments (F-actin) and binds to actin monomers. The protein is Actin-depolymerizing factor 2 (ADF2) of Oryza sativa subsp. japonica (Rice).